Consider the following 285-residue polypeptide: Hydrolase in pqqF 5'region (285 aa).

Residues Met22 to Arg258 form the CN hydrolase domain. The active-site Proton acceptor is Glu60. Lys131 functions as the Proton donor in the catalytic mechanism. Catalysis depends on Cys165, which acts as the Nucleophile.

Belongs to the carbon-nitrogen hydrolase superfamily. NIT1/NIT2 family.

This chain is Hydrolase in pqqF 5'region, found in Pseudomonas protegens (strain DSM 19095 / LMG 27888 / CFBP 6595 / CHA0).